A 315-amino-acid polypeptide reads, in one-letter code: MSESLRIIFAGTPDFAARHLDALLSSGHNVVGVFTQPDRPAGRGKKLMPSPVKVLAEEKALPVFQPVSLRPQENQQLVADLQADVMVVVAYGLILPKAVLEMPRLGCINVHGSLLPRWRGAAPIQRSLWAGDAETGVTIMQMDVGLDTGDMLYKLSCPITAEDTSGTLYDKLAELGPQGLITTLKQLADGTAKPEVQDETLVTYAEKLSKEEARIDWSLSAAQLERCIRAFNPWPMSWLEIEGQPVKVWKASVIDTATNAAPGTILEANKQGIQVATGDGILNLLSLQPAGKKAMSAQDLLNSRREWFVPGNRLV.

113-116 is a binding site for (6S)-5,6,7,8-tetrahydrofolate; sequence SLLP.

This sequence belongs to the Fmt family.

The catalysed reaction is L-methionyl-tRNA(fMet) + (6R)-10-formyltetrahydrofolate = N-formyl-L-methionyl-tRNA(fMet) + (6S)-5,6,7,8-tetrahydrofolate + H(+). Functionally, attaches a formyl group to the free amino group of methionyl-tRNA(fMet). The formyl group appears to play a dual role in the initiator identity of N-formylmethionyl-tRNA by promoting its recognition by IF2 and preventing the misappropriation of this tRNA by the elongation apparatus. This Escherichia coli O17:K52:H18 (strain UMN026 / ExPEC) protein is Methionyl-tRNA formyltransferase.